Reading from the N-terminus, the 270-residue chain is Abhydrolase domain-containing protein C22H12.03 (270 aa).

Residues 21 to 257 (PPVLIFHGLL…CGHWVHFEKP (237 aa)) enclose the AB hydrolase-1 domain. Catalysis depends on charge relay system residues Ser95, Glu190, and His250.

Belongs to the AB hydrolase superfamily.

It is found in the mitochondrion. The protein is Abhydrolase domain-containing protein C22H12.03 of Schizosaccharomyces pombe (strain 972 / ATCC 24843) (Fission yeast).